We begin with the raw amino-acid sequence, 538 residues long: Phosphoenolpyruvate carboxykinase (ATP) (538 aa).

Residue Arg-64 participates in substrate binding. Arg-152 is a binding site for ATP. The substrate site is built by Tyr-205 and Lys-211. ATP contacts are provided by residues Lys-211, His-230, and 246 to 254; that span reads GLSGTGKTT. Residues Lys-211 and His-230 each coordinate Mn(2+). Position 267 (Asp-267) interacts with Mn(2+). Residues Glu-295, Arg-331, Arg-344, 447–448, and Thr-453 each bind ATP; that span reads RI. Arg-331 lines the substrate pocket.

The protein belongs to the phosphoenolpyruvate carboxykinase (ATP) family. Monomer. Mn(2+) is required as a cofactor.

The protein localises to the cytoplasm. It carries out the reaction oxaloacetate + ATP = phosphoenolpyruvate + ADP + CO2. Its pathway is carbohydrate biosynthesis; gluconeogenesis. Involved in gluconeogenesis. Catalyzes the conversion of oxaloacetate (OAA) to phosphoenolpyruvate (PEP) through direct phosphoryl transfer between the nucleoside triphosphate and OAA. The protein is Phosphoenolpyruvate carboxykinase (ATP) of Actinobacillus succinogenes (strain ATCC 55618 / DSM 22257 / CCUG 43843 / 130Z).